The following is a 2312-amino-acid chain: Protein Ycf2 (2312 aa).

ATP is bound at residue 1630 to 1637 (GSIGTGRS).

This sequence belongs to the Ycf2 family.

The protein resides in the plastid. The protein localises to the chloroplast stroma. Probable ATPase of unknown function. Its presence in a non-photosynthetic plant (Epifagus virginiana) and experiments in tobacco indicate that it has an essential function which is probably not related to photosynthesis. The sequence is that of Protein Ycf2 from Manihot esculenta (Cassava).